We begin with the raw amino-acid sequence, 172 residues long: Immune protein Tsi1 (172 aa).

A signal peptide spans 1 to 19 (MKLLAGSFAALFLSLSAQA). Intrachain disulfides connect Cys22–Cys167, Cys79–Cys121, and Cys147–Cys155.

In terms of assembly, forms a heterotetramer with Tse1 consisting of two Tse1 dimers and two Tsi1 dimers. Formation of the complex inactivates Tse1 enzymatic activity.

Its function is as follows. Immunity protein that plays a role in preventing early activation of toxin Tse1. Binds to a large surface of Tse1 and thereby occludes the active site to specifically inhibits enzyme activity by forming a hydrogen bond with the catalytic diad. The sequence is that of Immune protein Tsi1 from Pseudomonas aeruginosa (strain ATCC 15692 / DSM 22644 / CIP 104116 / JCM 14847 / LMG 12228 / 1C / PRS 101 / PAO1).